The following is a 553-amino-acid chain: MSTKTTIKSQTSHRGYSASSARVPGLNRSGFSSVSVCRSRGSGGSSAMCGGAGFGSRSLYGVGSSKRISIGGGSCGIGGGYGSRFGGSFGIGGGAGSGFGFGGGAGFGGGYGGAGFPVCPPGGIQEVTINQSLLTPLNLQIDPTIQRVRTEEREQIKTLNNKFASFIDKVRFLEQQNKVLDTKWALLQEQGTKTVRQNLEPMFEQYISNLRRQLDSIIGERGRLDSELRNMQDTVEDYKSKYEDEINKRTAAENEFVTLKKDVDAAYMNKVELQAKADSLTDDINFLRALYEAELSQMQTHISDTSVVLSMDNNRSLDLDSIIAEVKAQYEDIAQRSRAEAESWYQTKYEELQVTAGRHGDDLRNTKQEIAEINRMIQRLRSEIDHVKKQCANLQAAIADAEQRGEMALKDARGKLEGLEDALQKAKQDMARLLKEYQELMNVKLALDVEIATYRKLLEGEECRLNGEGVGPVNISVVQSTVSSGYGSAGGASSSLGLGGGSSYSYSSSHGLGGGFSAGSGRAIGGGLSSSGGLSSSTIKYTTTSSSKKSYRQ.

A compositionally biased stretch (polar residues) spans 1 to 20; the sequence is MSTKTTIKSQTSHRGYSASS. The segment at 1-21 is disordered; sequence MSTKTTIKSQTSHRGYSASSA. Positions 1–151 are head; sequence MSTKTTIKSQ…DPTIQRVRTE (151 aa). Residues 152–187 are coil 1A; that stretch reads EREQIKTLNNKFASFIDKVRFLEQQNKVLDTKWALL. One can recognise an IF rod domain in the interval 152-465; sequence EREQIKTLNN…KLLEGEECRL (314 aa). The interval 188 to 206 is linker 1; sequence QEQGTKTVRQNLEPMFEQY. The interval 207-298 is coil 1B; that stretch reads ISNLRRQLDS…ALYEAELSQM (92 aa). Residues 299–322 are linker 12; that stretch reads QTHISDTSVVLSMDNNRSLDLDSI. The coil 2 stretch occupies residues 323-461; sequence IAEVKAQYED…ATYRKLLEGE (139 aa). The segment at 462–553 is tail; the sequence is ECRLNGEGVG…TSSSKKSYRQ (92 aa). The disordered stretch occupies residues 528–553; that stretch reads LSSSGGLSSSTIKYTTTSSSKKSYRQ. Low complexity predominate over residues 531–553; it reads SGGLSSSTIKYTTTSSSKKSYRQ.

Belongs to the intermediate filament family. In terms of assembly, heterodimer of a type I and a type II keratin. KRT6 isomers associate with KRT16 and/or KRT17. Interacts with TCHP. In terms of tissue distribution, predominates in the adult trunk skin, tongue, trachea/esophagus and eye. In adult skin, localization is restricted to hair follicles, where it is localized predominantly in the outer root sheath.

Its function is as follows. Epidermis-specific type I keratin involved in wound healing. Involved in the activation of follicular keratinocytes after wounding, while it does not play a major role in keratinocyte proliferation or migration. Participates in the regulation of epithelial migration by inhibiting the activity of SRC during wound repair. The polypeptide is Keratin, type II cytoskeletal 6A (Krt6a) (Mus musculus (Mouse)).